Reading from the N-terminus, the 446-residue chain is Exodeoxyribonuclease 7 large subunit (446 aa).

This sequence belongs to the XseA family. In terms of assembly, heterooligomer composed of large and small subunits.

It is found in the cytoplasm. It catalyses the reaction Exonucleolytic cleavage in either 5'- to 3'- or 3'- to 5'-direction to yield nucleoside 5'-phosphates.. In terms of biological role, bidirectionally degrades single-stranded DNA into large acid-insoluble oligonucleotides, which are then degraded further into small acid-soluble oligonucleotides. The protein is Exodeoxyribonuclease 7 large subunit of Streptococcus pneumoniae (strain ATCC 700669 / Spain 23F-1).